An 88-amino-acid polypeptide reads, in one-letter code: Small ribosomal subunit protein bS20 (88 aa).

It belongs to the bacterial ribosomal protein bS20 family.

In terms of biological role, binds directly to 16S ribosomal RNA. The polypeptide is Small ribosomal subunit protein bS20 (Clostridium botulinum (strain ATCC 19397 / Type A)).